Consider the following 396-residue polypeptide: 1-deoxy-D-xylulose 5-phosphate reductoisomerase (396 aa).

NADPH contacts are provided by T10, G11, S12, I13, G36, K37, N38, and N124. Position 125 (K125) interacts with 1-deoxy-D-xylulose 5-phosphate. E126 is a binding site for NADPH. D150 serves as a coordination point for Mn(2+). The 1-deoxy-D-xylulose 5-phosphate site is built by S151, E152, S186, and H209. A Mn(2+)-binding site is contributed by E152. G215 is a binding site for NADPH. S222, N227, K228, and E231 together coordinate 1-deoxy-D-xylulose 5-phosphate. E231 serves as a coordination point for Mn(2+).

This sequence belongs to the DXR family. Mg(2+) is required as a cofactor. The cofactor is Mn(2+).

It carries out the reaction 2-C-methyl-D-erythritol 4-phosphate + NADP(+) = 1-deoxy-D-xylulose 5-phosphate + NADPH + H(+). It functions in the pathway isoprenoid biosynthesis; isopentenyl diphosphate biosynthesis via DXP pathway; isopentenyl diphosphate from 1-deoxy-D-xylulose 5-phosphate: step 1/6. Catalyzes the NADPH-dependent rearrangement and reduction of 1-deoxy-D-xylulose-5-phosphate (DXP) to 2-C-methyl-D-erythritol 4-phosphate (MEP). The protein is 1-deoxy-D-xylulose 5-phosphate reductoisomerase of Actinobacillus pleuropneumoniae serotype 3 (strain JL03).